The sequence spans 459 residues: Peptidyl-prolyl cis-trans isomerase FKBP4 (459 aa).

An N-acetylmethionine; in peptidyl-prolyl cis-trans isomerase FKBP4; alternate modification is found at Met-1. Positions 1–24 (MTAEEMKATESGAQSAPLPMEGVD) are disordered. Thr-2 is modified (N-acetylthreonine; in peptidyl-prolyl cis-trans isomerase FKBP4, N-terminally processed; partial). One can recognise a PPIase FKBP-type 1 domain in the interval 50–138 (GDRVFVHYTG…VFEVELFEFK (89 aa)). A Phosphothreonine; by CK2 modification is found at Thr-143. Residues 167–253 (GAIVEVALEG…KYELHLKSFE (87 aa)) form the PPIase FKBP-type 2 domain. Tyr-220 is subject to Phosphotyrosine. The tract at residues 267-400 (LEQSTIVKER…TQLAVCQQRI (134 aa)) is interaction with tubulin. 3 TPR repeats span residues 270-303 (STIV…LEYE), 319-352 (LASH…DSNN), and 353-386 (EKGL…YPNN). At Lys-282 the chain carries N6-acetyllysine. Arg-373 is modified (omega-N-methylarginine). The disordered stretch occupies residues 421–459 (EENKAKAEASSGDHPTDTEMKEEQKSNTAGSQSQVETEA). The segment covering 434-445 (HPTDTEMKEEQK) has biased composition (basic and acidic residues). At Thr-436 the chain carries Phosphothreonine. A Glycyl lysine isopeptide (Lys-Gly) (interchain with G-Cter in SUMO1) cross-link involves residue Lys-441. Over residues 446-459 (SNTAGSQSQVETEA) the composition is skewed to polar residues. Residues Ser-451 and Ser-453 each carry the phosphoserine modification.

In terms of assembly, homodimer. Interacts with GLMN. Associates with HSP90AA1 and HSP70 in steroid hormone receptor complexes. Also interacts with peroxisomal phytanoyl-CoA alpha-hydroxylase (PHYH). Interacts with NR3C1 and dynein. Interacts with HSF1 in the HSP90 complex. Associates with tubulin. Interacts with MAPT/TAU. Interacts (via TPR domain) with S100A1, S100A2 and S100A6; the interaction is Ca(2+) dependent. Interaction with S100A1 and S100A2 (but not with S100A6) leads to inhibition of FKBP4-HSP90 interaction. Interacts with dynein; causes partially NR3C1 transport to the nucleus. In terms of processing, phosphorylation by CK2 results in loss of HSP90 binding activity. In terms of tissue distribution, widely expressed.

The protein localises to the cytoplasm. The protein resides in the cytosol. It localises to the mitochondrion. It is found in the nucleus. Its subcellular location is the cytoskeleton. The protein localises to the cell projection. The protein resides in the axon. It catalyses the reaction [protein]-peptidylproline (omega=180) = [protein]-peptidylproline (omega=0). Inhibited by FK506. In terms of biological role, immunophilin protein with PPIase and co-chaperone activities. Component of steroid receptors heterocomplexes through interaction with heat-shock protein 90 (HSP90). May play a role in the intracellular trafficking of heterooligomeric forms of steroid hormone receptors between cytoplasm and nuclear compartments. The isomerase activity controls neuronal growth cones via regulation of TRPC1 channel opening. Also acts as a regulator of microtubule dynamics by inhibiting MAPT/TAU ability to promote microtubule assembly. May have a protective role against oxidative stress in mitochondria. The chain is Peptidyl-prolyl cis-trans isomerase FKBP4 (FKBP4) from Homo sapiens (Human).